We begin with the raw amino-acid sequence, 471 residues long: Tryptophanase (471 aa).

Residues Lys5, Lys115, and Lys156 each carry the N6-acetyllysine modification. Lys270 is modified (N6-(pyridoxal phosphate)lysine). Lys450 is modified (N6-acetyllysine).

It belongs to the beta-eliminating lyase family. As to quaternary structure, homotetramer. It depends on pyridoxal 5'-phosphate as a cofactor.

The catalysed reaction is L-tryptophan + H2O = indole + pyruvate + NH4(+). It participates in amino-acid degradation; L-tryptophan degradation via pyruvate pathway; indole and pyruvate from L-tryptophan: step 1/1. The polypeptide is Tryptophanase (Escherichia fergusonii (strain ATCC 35469 / DSM 13698 / CCUG 18766 / IAM 14443 / JCM 21226 / LMG 7866 / NBRC 102419 / NCTC 12128 / CDC 0568-73)).